A 159-amino-acid chain; its full sequence is Small ribosomal subunit protein uS4 (159 aa).

The S4 RNA-binding domain maps to 106 to 158 (RRLQTIVYRMGLAKSIYHARQLIVHGHIAVAGRRVSSPGFLVPRELEDKISLI).

The protein belongs to the universal ribosomal protein uS4 family. In terms of assembly, part of the 30S ribosomal subunit. Contacts protein S5. The interaction surface between S4 and S5 is involved in control of translational fidelity.

One of the primary rRNA binding proteins, it binds directly to 16S rRNA where it nucleates assembly of the body of the 30S subunit. Its function is as follows. With S5 and S12 plays an important role in translational accuracy. This Pyrobaculum neutrophilum (strain DSM 2338 / JCM 9278 / NBRC 100436 / V24Sta) (Thermoproteus neutrophilus) protein is Small ribosomal subunit protein uS4.